The primary structure comprises 346 residues: Cysteinyl leukotriene receptor 2 (346 aa).

Residues 1-42 (MERKFMSLQPSISVSEMEPNGTFSNNNSRNCTIENFKREFFP) are Extracellular-facing. N-linked (GlcNAc...) asparagine glycosylation is found at asparagine 20, asparagine 26, and asparagine 30. Residues 43 to 63 (IVYLIIFFWGVLGNGLSIYVF) traverse the membrane as a helical segment. At 64–72 (LQPYKKSTS) the chain is on the cytoplasmic side. Residues 73-93 (VNVFMLNLAISDLLFISTLPF) traverse the membrane as a helical segment. At 94–123 (RADYYLRGSNWIFGDLACRIMSYSLYVNMY) the chain is on the extracellular side. Cysteines 111 and 187 form a disulfide. A helical membrane pass occupies residues 124-144 (SSIYFLTVLSVVRFLAMVHPF). Over 145-153 (RLLHVTSIR) the chain is Cytoplasmic. A helical transmembrane segment spans residues 154-174 (SAWILCGIIWILIMASSIMLL). Over 175-204 (DSGSEQNGSVTSCLELNLYKIAKLQTMNYI) the chain is Extracellular. N-linked (GlcNAc...) asparagine glycosylation is present at asparagine 181. The chain crosses the membrane as a helical span at residues 205 to 225 (ALVVGCLLPFFTLSICYLLII). Over 226 to 245 (RVLLKVEVPESGLRVSHRKA) the chain is Cytoplasmic. A helical membrane pass occupies residues 246 to 266 (LTTIIITLIIFFLCFLPYHTL). Residues 267–286 (RTVHLTTWKVGLCKDRLHKA) are Extracellular-facing. Residues 287–307 (LVITLALAAANACFNPLLYYF) form a helical membrane-spanning segment. Over 308–346 (AGENFKDRLKSALRKGHPQKAKTKCVFPVSVWLRKETRV) the chain is Cytoplasmic.

Belongs to the G-protein coupled receptor 1 family. As to expression, widely expressed, with highest levels in the heart, placenta, spleen, peripheral blood leukocytes and adrenal gland. In lung, expressed in the interstitial macrophages, and slightly in smooth muscle cells.

Its subcellular location is the cell membrane. Receptor for cysteinyl leukotrienes. The response is mediated via a G-protein that activates a phosphatidylinositol-calcium second messenger system. Stimulation by BAY u9773, a partial agonist, induces specific contractions of pulmonary veins and might also have an indirect role in the relaxation of the pulmonary vascular endothelium. The rank order of affinities for the leukotrienes is LTC4 = LTD4 &gt;&gt; LTE4. This is Cysteinyl leukotriene receptor 2 (CYSLTR2) from Homo sapiens (Human).